The chain runs to 150 residues: UPF0208 membrane protein VV1_2222 (150 aa).

A run of 2 helical transmembrane segments spans residues 42 to 62 (FGIKVMPAIAAISVLTQMAFN) and 70 to 90 (AIVMALFALSLPLQGMWWLGH).

Belongs to the UPF0208 family.

It is found in the cell inner membrane. This is UPF0208 membrane protein VV1_2222 from Vibrio vulnificus (strain CMCP6).